A 227-amino-acid polypeptide reads, in one-letter code: Ribosomal RNA large subunit methyltransferase E (227 aa).

S-adenosyl-L-methionine-binding residues include Gly78, Trp80, Asp103, Asp119, and Asp143. Lys183 functions as the Proton acceptor in the catalytic mechanism.

This sequence belongs to the class I-like SAM-binding methyltransferase superfamily. RNA methyltransferase RlmE family.

It localises to the cytoplasm. It catalyses the reaction uridine(2552) in 23S rRNA + S-adenosyl-L-methionine = 2'-O-methyluridine(2552) in 23S rRNA + S-adenosyl-L-homocysteine + H(+). In terms of biological role, specifically methylates the uridine in position 2552 of 23S rRNA at the 2'-O position of the ribose in the fully assembled 50S ribosomal subunit. This chain is Ribosomal RNA large subunit methyltransferase E, found in Rickettsia africae (strain ESF-5).